Here is a 59-residue protein sequence, read N- to C-terminus: Potassium channel toxin alpha-KTx 15.2 (59 aa).

The first 22 residues, 1-22 (MKFSSIILLTLLICSMSKFGNC), serve as a signal peptide directing secretion. Residue glutamine 23 is modified to Pyrrolidone carboxylic acid. 3 cysteine pairs are disulfide-bonded: cysteine 30–cysteine 50, cysteine 35–cysteine 55, and cysteine 39–cysteine 57.

It belongs to the short scorpion toxin superfamily. Potassium channel inhibitor family. Alpha-KTx 15 subfamily. As to expression, expressed by the venom gland.

It is found in the secreted. Functionally, blocks both human ERG1/Kv11.1/KCNH2 potassium channels (in a reversible manner) and A-type voltage-gated potassium channels Kv4/KCND (in an irreversible manner). The presence of the Kv4-associated proteins DPP6 or DPP10 is mandatory to have high-affinity blockade of Kv4.2/KCND2 and Kv4.3/KCND3 channels. In contrast, the presence of the Kv4-associated protein KChIP1/KCNIP1 does not enhance the affinity blockade. May dispose of two functional faces (A and B); the two basic residues (Arg-40 and Lys-41) on the alpha-helix side of the peptide that blocks the hERG current (face A) and the typical dyad through which it blocks A-type currents on the beta-sheet side (face B). In adult rat brain, it binds to sites in the striatum, hippocampus, superior colliculus, and cerebellum. It shares the same target in rat brain than AaTX1 (AC Q867F4) and AmmTX3 (AC P60208). In DPP6 knockout mice, A-type currents are much less affected by the toxin than in wild-type mice. This is Potassium channel toxin alpha-KTx 15.2 from Olivierus martensii (Manchurian scorpion).